Here is a 445-residue protein sequence, read N- to C-terminus: Phosphoglucosamine mutase (445 aa).

The active-site Phosphoserine intermediate is the S102. Mg(2+) is bound by residues S102, D241, D243, and D245. S102 bears the Phosphoserine mark.

It belongs to the phosphohexose mutase family. Requires Mg(2+) as cofactor. In terms of processing, activated by phosphorylation.

It catalyses the reaction alpha-D-glucosamine 1-phosphate = D-glucosamine 6-phosphate. Its function is as follows. Catalyzes the conversion of glucosamine-6-phosphate to glucosamine-1-phosphate. The chain is Phosphoglucosamine mutase from Salmonella dublin (strain CT_02021853).